The primary structure comprises 79 residues: Moronecidin (79 aa).

The N-terminal stretch at 1-22 (MKCATLSLVLSMVVLMAEPGDA) is a signal peptide. Glycine 44 carries the post-translational modification Glycine amide. Residues 45-68 (GKAEQDQQDQQYQQDQQDQQAQQY) form a disordered region. Residues 47–79 (AEQDQQDQQYQQDQQDQQAQQYQRFNRERAAFD) constitute a propeptide that is removed on maturation. Positions 52-68 (QDQQYQQDQQDQQAQQY) are enriched in low complexity.

In terms of tissue distribution, expressed in gill, skin, intestine, spleen, anterior kidney, and blood cells.

It localises to the secreted. Its function is as follows. Antimicrobial peptide with broad-spectrum activity against Gram-positive and Gram-negative bacteria as well as against a variety of fungi. Rapidly inactivates both channel catfish herpesvirus (ED(50)=4 uM) and frog virus 3 (ED(50)=13 uM) over a wide temperature range. Seems to disrupt the membranes by adopting an alpha helical conformation. The protein is Moronecidin of Morone chrysops (White bass).